Consider the following 940-residue polypeptide: MAFNKLESSNNQEIISEEVGILKELLDDATRGMAGEQGLTTIQHLVELYDEGDYEALTQAISEMTNDDMVVASRYFSLLPLLINISEDVDLAYEVNRKNNIDESYLGKLSETFDVVAESDNARDILENVNVVPVLTAHPTQVQRKTMLELTNHIHELLRKHRDVKDGLINKDKWYADLRRYVEIMMKTDIIREKKLKVKNEITNVMEYYNSSLIKAITKLSHEFKRLAVEKGIELDNPTPITMGMWIGGDRDGNPFVTAETLKLSATLQSEVILNYYIEKVDNLYRSFSLSSRLTEVSETVAEMAKLSPDTSVYRENEPYRRAFSYIQSKLIQTLLFFKAGNFSKERAAKRLSENVRLGSVSTGEVVADFVHDRLSQSLQAVSQQTTEFYETAEAFHDDLLAIKNSLLENDDSVLISGDFEELLQAVEVFGFYLATIDMRQDSSVHEACVAELLKSANIVDNYSELTEVEKVAVLLKELQEDPRTLSSTNVSKSETLEKELAIFRTARLLKDYLGEEVIKQHIISHTESVSDMFELAILLKEVGLVDTERARVQIVPLFETIEDLENSNEIMKQYLGYDIVKRWIKNSNNYQEIMLGYSDSNKDGGYLSSGWTLYKAQNELTNIGEERGIKITFFHGRGGTVGRGGGPSYDAITSQPFGTIKDRIRLTEQGEVIGNKYGNKDAAYYNLEMLVSATLDRMVTRQITDPDELVDFREIMDSIVQDSNRIYRDLVFGNEHFYDYFFEASPIKEVSSLNIGSRPAARKTITDISGLRAIPWVFSWSQNRIMLPGWYGVGSAFNHYIEAEEGNLEKLQHMFETWPFFRSLLSNVDMVLSKSDMNIAFHYAQLAESEEVRSVFNIILDEWQLTKNVILAIEKHDDFLEESPSLKASLGFRLPYFNVLNYIQIELIKRLRNNNLTDDEISLIHITINGIATGLRNSG.

Catalysis depends on residues histidine 138 and lysine 603.

The protein belongs to the PEPCase type 1 family. Requires Mg(2+) as cofactor.

The enzyme catalyses oxaloacetate + phosphate = phosphoenolpyruvate + hydrogencarbonate. Functionally, forms oxaloacetate, a four-carbon dicarboxylic acid source for the tricarboxylic acid cycle. The sequence is that of Phosphoenolpyruvate carboxylase from Streptococcus thermophilus (strain ATCC BAA-250 / LMG 18311).